The sequence spans 246 residues: tRNA (guanine-N(1)-)-methyltransferase (246 aa).

Residues glycine 114 and 134–139 (IGDYIL) each bind S-adenosyl-L-methionine.

This sequence belongs to the RNA methyltransferase TrmD family. As to quaternary structure, homodimer.

The protein localises to the cytoplasm. It carries out the reaction guanosine(37) in tRNA + S-adenosyl-L-methionine = N(1)-methylguanosine(37) in tRNA + S-adenosyl-L-homocysteine + H(+). Specifically methylates guanosine-37 in various tRNAs. The polypeptide is tRNA (guanine-N(1)-)-methyltransferase (Coxiella burnetii (strain CbuK_Q154) (Coxiella burnetii (strain Q154))).